A 185-amino-acid polypeptide reads, in one-letter code: MARDREHRAEREDRDNTFVDKLVHINRVAKVVKGGRRFGFAALVIVGDQKGRVGFGHGKAREVPEAIRKATESAKRALIRVPLREGRTLHHDVHGHHGAGKVILRAAPAGTGIIAGGPMRAVFETLGVHDVVAKSFGSSNPYNMVRATFDALTNQDSPRSVAARRGLKVSQLQSRRRVEDAEATD.

Positions 18–81 (FVDKLVHINR…ESAKRALIRV (64 aa)) constitute an S5 DRBM domain.

This sequence belongs to the universal ribosomal protein uS5 family. In terms of assembly, part of the 30S ribosomal subunit. Contacts proteins S4 and S8.

Its function is as follows. With S4 and S12 plays an important role in translational accuracy. In terms of biological role, located at the back of the 30S subunit body where it stabilizes the conformation of the head with respect to the body. The polypeptide is Small ribosomal subunit protein uS5 (Azorhizobium caulinodans (strain ATCC 43989 / DSM 5975 / JCM 20966 / LMG 6465 / NBRC 14845 / NCIMB 13405 / ORS 571)).